The primary structure comprises 1198 residues: Regulator of G-protein signaling 3 (1198 aa).

The 120-residue stretch at 137–256 (GAGQLRLSID…TPDKEISGWY (120 aa)) folds into the C2 domain. Residues 299–376 (KITIPRGKDG…EIILLVWRMV (78 aa)) enclose the PDZ domain. The residue at position 448 (R448) is an Omega-N-methylarginine. The tract at residues 669 to 933 (QQLAASPPDS…GAEGGLSLRV (265 aa)) is disordered. Position 674 is a phosphoserine (S674). The span at 679–697 (KMFETEADEKREMALEEGK) shows a compositional bias: basic and acidic residues. A compositionally biased stretch (polar residues) spans 739–751 (EPLSSKDSATSEG). Residues 753 to 773 (PPGPDAPPSKDVPPCQEPPPA) show a composition bias toward pro residues. Acidic residues predominate over residues 877–906 (GDEEDAEEAEEVEEGEEGEEDEDEDTSDDN). The segment covering 907 to 917 (YGERSEAKRSS) has biased composition (basic and acidic residues). S943, S946, S978, and S1007 each carry phosphoserine. 2 disordered regions span residues 1007–1026 (SGADTVGDDDEASRKRKSKN) and 1032–1056 (KNKLGIFRRRNESPGAPPAGKADKM). In terms of domain architecture, RGS spans 1073-1198 (SLEKLLVHKY…INQKKMSPPL (126 aa)).

In terms of assembly, binds EFNB1 and EFNB2. Binds the GNB1-GNG2 heterodimer. Phosphorylated by cyclic GMP-dependent protein kinase. Post-translationally, ISGylated.

The protein resides in the cytoplasm. It localises to the nucleus. It is found in the cell membrane. Its function is as follows. Down-regulates signaling from heterotrimeric G-proteins by increasing the GTPase activity of the alpha subunits, thereby driving them into their inactive GDP-bound form. Down-regulates G-protein-mediated release of inositol phosphates and activation of MAP kinases. The polypeptide is Regulator of G-protein signaling 3 (RGS3) (Homo sapiens (Human)).